The sequence spans 116 residues: Aca2 repressor (116 aa).

Y34 contributes to the DNA binding site. Position 92 (H92) interacts with Mg(2+).

As to quaternary structure, homodimer.

Its function is as follows. Represses the expression of the acrIF8-aca2 operon. Regulates the transcription and translation of phage anti-CRISPR acrIF8 gene (AC H9C181), which is necessary because the expression of this gene rises rapidely upon infection to enable evasion from host CRISPR-Cas defense but is probably toxic to the host cell. Aca2 repressor can inhibit acrIF8 transcriptionally through DNA binding to 2 inverted repeats in the promoter region and translationally by binding conserved RNA stem-loops on mRNAs thereby blocking ribosome access. Both modes of regulation together are essential for complete tight repression. This chain is Aca2 repressor, found in Pectobacterium carotovorum (Erwinia carotovora).